The primary structure comprises 244 residues: Tyrosine recombinase XerD-like (244 aa).

The Core-binding (CB) domain occupies 1 to 73 (MRDRISAFLE…ACNQFLYFLY (73 aa)). A Tyr recombinase domain is found at 90-244 (AEKKTEKPEI…KTVLTLEKYR (155 aa)). Residues Lys-150 and Arg-211 contribute to the active site. Tyr-243 (O-(3'-phospho-DNA)-tyrosine intermediate) is an active-site residue.

It belongs to the 'phage' integrase family. XerD-like subfamily.

It is found in the cytoplasm. Functionally, putative tyrosine recombinase. Not involved in the cutting and rejoining of the recombining DNA molecules on dif(SL) site. The sequence is that of Tyrosine recombinase XerD-like from Streptococcus pneumoniae (strain Hungary19A-6).